The following is a 245-amino-acid chain: DnaJ homolog subfamily B member 6-B (245 aa).

One can recognise a J domain in the interval 3–69; the sequence is EYYDVLGVQR…KKRDIYDKYG (67 aa).

In terms of assembly, homooligomer.

It is found in the cytoplasm. It localises to the perinuclear region. The protein localises to the nucleus. In terms of biological role, has a stimulatory effect on the ATPase activity of HSP70 in a dose-dependent and time-dependent manner and hence acts as a co-chaperone of HSP70. Plays an indispensable role in the organization of KRT8/KRT18 filaments. Acts as an endogenous molecular chaperone for neuronal proteins including huntingtin. Suppresses aggregation and toxicity of polyglutamine-containing, aggregation-prone proteins. Also reduces cellular toxicity and caspase-3 activity. The sequence is that of DnaJ homolog subfamily B member 6-B (dnajb6-b) from Xenopus laevis (African clawed frog).